A 386-amino-acid chain; its full sequence is Patatin group M-3 (386 aa).

The N-terminal stretch at 1–23 (MATTKSFLILFFMILATTSSTCA) is a signal peptide. Residues 32-229 (LSIDGGGIKG…TVGDPALLSL (198 aa)) form the PNPLA domain. A GXGXXG motif is present at residues 36–41 (GGGIKG). A GXSXG motif is present at residues 75–79 (GTSTG). Serine 77 serves as the catalytic Nucleophile. Asparagine 115 carries an N-linked (GlcNAc...) asparagine glycan. Aspartate 215 serves as the catalytic Proton acceptor. Residues 215-217 (DGG) carry the DGA/G motif. Positions 321 to 384 (ENALTGTTTE…DRKKLRANKA (64 aa)) form a coiled coil.

The protein belongs to the patatin family. As to expression, tuber.

The protein resides in the vacuole. In terms of biological role, probable lipolytic acyl hydrolase (LAH), an activity which is thought to be involved in the response of tubers to pathogens. The chain is Patatin group M-3 from Solanum tuberosum (Potato).